The sequence spans 363 residues: Peptide chain release factor 1 (363 aa).

Glutamine 237 carries the N5-methylglutamine modification. The segment covering 286–295 (EKRRSAEATT) has biased composition (basic and acidic residues). Residues 286 to 305 (EKRRSAEATTRRNLVGSGDR) form a disordered region.

The protein belongs to the prokaryotic/mitochondrial release factor family. In terms of processing, methylated by PrmC. Methylation increases the termination efficiency of RF1.

Its subcellular location is the cytoplasm. In terms of biological role, peptide chain release factor 1 directs the termination of translation in response to the peptide chain termination codons UAG and UAA. This is Peptide chain release factor 1 from Shewanella amazonensis (strain ATCC BAA-1098 / SB2B).